The primary structure comprises 134 residues: Pro-opiomelanocortin (134 aa).

An N-acetylserine modification is found at S1. V13 is modified (valine amide). Position 31 is a phosphoserine (S31). 2 stretches are compositionally biased toward basic and acidic residues: residues 43–52 (LARERPEPAR) and 79–104 (SAEK…DKRY). The tract at residues 43–107 (LARERPEPAR…PAKDKRYGGF (65 aa)) is disordered.

Belongs to the POMC family. Post-translationally, specific enzymatic cleavages at paired basic residues yield the different active peptides. ACTH and MSH are produced by the pituitary gland.

It localises to the secreted. Functionally, stimulates the adrenal glands to release cortisol. Anorexigenic peptide. Increases the pigmentation of skin by increasing melanin production in melanocytes. In terms of biological role, increases the pigmentation of skin by increasing melanin production in melanocytes. Its function is as follows. Endogenous orexigenic opiate. Functionally, endogenous opiate. The chain is Pro-opiomelanocortin (POMC) from Loxodonta africana (African elephant).